The sequence spans 213 residues: Large ribosomal subunit protein uL3 (213 aa).

Positions 124–151 are disordered; the sequence is KRHGQSRGPMAHGSRYHRRPGSMGSIAP.

Belongs to the universal ribosomal protein uL3 family. Part of the 50S ribosomal subunit. Forms a cluster with proteins L14 and L19.

Its function is as follows. One of the primary rRNA binding proteins, it binds directly near the 3'-end of the 23S rRNA, where it nucleates assembly of the 50S subunit. This is Large ribosomal subunit protein uL3 from Geobacillus kaustophilus (strain HTA426).